The primary structure comprises 134 residues: Large ribosomal subunit protein mL41 (134 aa).

A mitochondrion-targeting transit peptide spans 1 to 13 (MGFLTAVTQGLVR).

This sequence belongs to the mitochondrion-specific ribosomal protein mL41 family. In terms of assembly, component of the mitochondrial ribosome large subunit (39S) which comprises a 16S rRNA and about 50 distinct proteins. Interacts with BCL2. Was also identified in the 28S mitochondrial ribosome.

It localises to the mitochondrion. Its function is as follows. Component of the mitochondrial ribosome large subunit. Also involved in apoptosis and cell cycle. Enhances p53/TP53 stability, thereby contributing to p53/TP53-induced apoptosis in response to growth-inhibitory condition. Enhances p53/TP53 translocation to the mitochondria. Has the ability to arrest the cell cycle at the G1 phase, possibly by stabilizing the CDKN1A and CDKN1B (p27Kip1) proteins. The polypeptide is Large ribosomal subunit protein mL41 (Mrpl41) (Rattus norvegicus (Rat)).